We begin with the raw amino-acid sequence, 51 residues long: Insulin (51 aa).

Disulfide bonds link Cys8/Cys37, Cys20/Cys50, and Cys36/Cys41.

Belongs to the insulin family. Heterodimer of a B chain and an A chain linked by two disulfide bonds.

The protein resides in the secreted. In terms of biological role, insulin decreases blood glucose concentration. It increases cell permeability to monosaccharides, amino acids and fatty acids. It accelerates glycolysis, the pentose phosphate cycle, and glycogen synthesis in liver. The sequence is that of Insulin from Pagrus major (Red sea bream).